A 914-amino-acid polypeptide reads, in one-letter code: Zinc finger protein 717 (914 aa).

Positions 22-93 (VSFEEVAVHF…EETPNLRLSA (72 aa)) constitute a KRAB domain. The C2H2-type 1; degenerate zinc finger occupies 209-231 (FQCNEQGKTFNTEAMFFIHKRVH). The C2H2-type 2; degenerate zinc-finger motif lies at 266–277 (RKSDFTKHQQTH). Residues 283–305 (YECVECEKPSISKSDLMLQCKMP) form a C2H2-type 3; degenerate zinc finger. C2H2-type zinc fingers lie at residues 311–333 (YACN…QRIH), 339–361 (YGCN…ERTH), 367–389 (YKCI…HRTH), 395–417 (YQCS…HRTH), 423–445 (YACD…QRTH), 451–473 (YECN…QRTH), 479–501 (YECN…QWTH), 507–529 (YECN…QRTH), 535–557 (YACN…HRTH), 563–585 (YECN…QRTH), 591–613 (YECN…KRTH), and 619–641 (YECN…QGTH). Residues 649 to 669 (CNECGKTFHRKSFLTIHQRTH) form a C2H2-type 16; degenerate zinc finger. The segment at 741-752 (QKSVLTVHHRTH) adopts a C2H2-type 17; degenerate zinc-finger fold. 5 consecutive C2H2-type zinc fingers follow at residues 758-780 (YECN…QGTH), 786-808 (YECD…QRTH), 814-836 (FECK…HRTH), 842-864 (FRCN…QRTH), and 870-892 (YECK…QQTH).

The protein belongs to the krueppel C2H2-type zinc-finger protein family.

The protein resides in the nucleus. In terms of biological role, may be involved in transcriptional regulation. In Homo sapiens (Human), this protein is Zinc finger protein 717.